Here is a 422-residue protein sequence, read N- to C-terminus: Lipoyl synthase, mitochondrial (422 aa).

Residues 1 to 34 (MAASSTRLRCLYASSAPAWKKSPSQSIISLSRHY) constitute a mitochondrion transit peptide. The segment covering 37–48 (TSSTTPSLNPDE) has biased composition (polar residues). The tract at residues 37-70 (TSSTTPSLNPDESSSSSSSTIPKRRKTTTFRDKL) is disordered. Residues Cys146, Cys151, Cys157, Cys177, Cys181, Cys184, and Ser383 each coordinate [4Fe-4S] cluster. The Radical SAM core domain occupies 160–372 (GSDKSAATAT…RQRALEMGFL (213 aa)).

Belongs to the radical SAM superfamily. Lipoyl synthase family. [4Fe-4S] cluster is required as a cofactor.

It is found in the mitochondrion. The enzyme catalyses [[Fe-S] cluster scaffold protein carrying a second [4Fe-4S](2+) cluster] + N(6)-octanoyl-L-lysyl-[protein] + 2 oxidized [2Fe-2S]-[ferredoxin] + 2 S-adenosyl-L-methionine + 4 H(+) = [[Fe-S] cluster scaffold protein] + N(6)-[(R)-dihydrolipoyl]-L-lysyl-[protein] + 4 Fe(3+) + 2 hydrogen sulfide + 2 5'-deoxyadenosine + 2 L-methionine + 2 reduced [2Fe-2S]-[ferredoxin]. It participates in protein modification; protein lipoylation via endogenous pathway; protein N(6)-(lipoyl)lysine from octanoyl-[acyl-carrier-protein]: step 2/2. Its function is as follows. Catalyzes the radical-mediated insertion of two sulfur atoms into the C-6 and C-8 positions of the octanoyl moiety bound to the lipoyl domains of lipoate-dependent enzymes, thereby converting the octanoylated domains into lipoylated derivatives. This is Lipoyl synthase, mitochondrial from Talaromyces stipitatus (strain ATCC 10500 / CBS 375.48 / QM 6759 / NRRL 1006) (Penicillium stipitatum).